The primary structure comprises 681 residues: DNA-directed RNA polymerase subunit beta' (681 aa).

The Zn(2+) site is built by C69, C71, C87, and C90. D489, D491, and D493 together coordinate Mg(2+).

It belongs to the RNA polymerase beta' chain family. RpoC1 subfamily. In plastids the minimal PEP RNA polymerase catalytic core is composed of four subunits: alpha, beta, beta', and beta''. When a (nuclear-encoded) sigma factor is associated with the core the holoenzyme is formed, which can initiate transcription. Mg(2+) serves as cofactor. It depends on Zn(2+) as a cofactor.

The protein resides in the plastid. The protein localises to the chloroplast. It catalyses the reaction RNA(n) + a ribonucleoside 5'-triphosphate = RNA(n+1) + diphosphate. Its function is as follows. DNA-dependent RNA polymerase catalyzes the transcription of DNA into RNA using the four ribonucleoside triphosphates as substrates. This Atropa belladonna (Belladonna) protein is DNA-directed RNA polymerase subunit beta'.